We begin with the raw amino-acid sequence, 290 residues long: ATP synthase gamma chain (290 aa).

Belongs to the ATPase gamma chain family. F-type ATPases have 2 components, CF(1) - the catalytic core - and CF(0) - the membrane proton channel. CF(1) has five subunits: alpha(3), beta(3), gamma(1), delta(1), epsilon(1). CF(0) has three main subunits: a, b and c.

Its subcellular location is the cell inner membrane. In terms of biological role, produces ATP from ADP in the presence of a proton gradient across the membrane. The gamma chain is believed to be important in regulating ATPase activity and the flow of protons through the CF(0) complex. In Bacteroides fragilis (strain ATCC 25285 / DSM 2151 / CCUG 4856 / JCM 11019 / LMG 10263 / NCTC 9343 / Onslow / VPI 2553 / EN-2), this protein is ATP synthase gamma chain.